The chain runs to 884 residues: Translation initiation factor IF-2 (884 aa).

Disordered regions lie at residues 42-62 and 123-254; these read DVQK…QEEV and EPKG…GGKK. Basic and acidic residues predominate over residues 194-212; sequence PAERREVVIPPKRKMEERA. Positions 234-248 are enriched in low complexity; that stretch reads EPETPAGGAPGAKKG. Residues 384–553 form the tr-type G domain; sequence KRPPVVTIMG…LLQADVMDLK (170 aa). The interval 393–400 is G1; the sequence is GHVDHGKT. A GTP-binding site is contributed by 393 to 400; it reads GHVDHGKT. Positions 418-422 are G2; that stretch reads GITQH. The segment at 439-442 is G3; sequence DTPG. Residues 439–443 and 493–496 contribute to the GTP site; these read DTPGH and NKID. The G4 stretch occupies residues 493 to 496; it reads NKID. A G5 region spans residues 529 to 531; the sequence is SAK.

Belongs to the TRAFAC class translation factor GTPase superfamily. Classic translation factor GTPase family. IF-2 subfamily.

Its subcellular location is the cytoplasm. One of the essential components for the initiation of protein synthesis. Protects formylmethionyl-tRNA from spontaneous hydrolysis and promotes its binding to the 30S ribosomal subunits. Also involved in the hydrolysis of GTP during the formation of the 70S ribosomal complex. The sequence is that of Translation initiation factor IF-2 from Geobacter metallireducens (strain ATCC 53774 / DSM 7210 / GS-15).